A 206-amino-acid chain; its full sequence is Large ribosomal subunit protein uL4 (206 aa).

The interval 49 to 73 (KTKTISEISGTTKKPFAQKGGGRAR) is disordered.

It belongs to the universal ribosomal protein uL4 family. Part of the 50S ribosomal subunit.

Functionally, one of the primary rRNA binding proteins, this protein initially binds near the 5'-end of the 23S rRNA. It is important during the early stages of 50S assembly. It makes multiple contacts with different domains of the 23S rRNA in the assembled 50S subunit and ribosome. Forms part of the polypeptide exit tunnel. In Paramagnetospirillum magneticum (strain ATCC 700264 / AMB-1) (Magnetospirillum magneticum), this protein is Large ribosomal subunit protein uL4.